Here is a 341-residue protein sequence, read N- to C-terminus: Inositol monophosphatase 3 (341 aa).

The helical transmembrane segment at 11–31 (LGIAVFCLLGVGVIYHLYAGV) threads the bilayer. Mg(2+)-binding residues include E117, D157, L159, D160, and D283. Position 117 (E117) interacts with substrate. Residues 159 to 162 (LDAT) and D283 contribute to the substrate site.

The protein belongs to the inositol monophosphatase superfamily. Mg(2+) is required as a cofactor.

It is found in the membrane. It carries out the reaction a myo-inositol phosphate + H2O = myo-inositol + phosphate. Its pathway is polyol metabolism; myo-inositol biosynthesis; myo-inositol from D-glucose 6-phosphate: step 2/2. The protein is Inositol monophosphatase 3 (bpnt2) of Danio rerio (Zebrafish).